The chain runs to 188 residues: Photosystem I assembly protein Ycf4 (188 aa).

The next 2 helical transmembrane spans lie at 26–46 and 68–88; these read YFWA…GLSS and LVMG…WFVI.

The protein belongs to the Ycf4 family.

It is found in the cellular thylakoid membrane. Its function is as follows. Seems to be required for the assembly of the photosystem I complex. The protein is Photosystem I assembly protein Ycf4 of Synechococcus sp. (strain ATCC 27144 / PCC 6301 / SAUG 1402/1) (Anacystis nidulans).